The following is a 258-amino-acid chain: L-aminoadipate-semialdehyde dehydrogenase-phosphopantetheinyl transferase (258 aa).

It belongs to the P-Pant transferase superfamily. AcpS family.

Its subcellular location is the cytoplasm. The protein localises to the nucleus. It catalyses the reaction apo-[ACP] + CoA = holo-[ACP] + adenosine 3',5'-bisphosphate + H(+). Catalyzes the transfer of a 4'-phosphopantetheine moiety from coenzyme A to a serine residue of acceptor proteins, such as alpha-aminoadipate reductase. Necessary for alpha-aminoadipate reductase activity. The chain is L-aminoadipate-semialdehyde dehydrogenase-phosphopantetheinyl transferase (lys7) from Schizosaccharomyces pombe (strain 972 / ATCC 24843) (Fission yeast).